A 489-amino-acid polypeptide reads, in one-letter code: Ribulose bisphosphate carboxylase large chain 2 (489 aa).

The substrate site is built by N128 and T178. Residue K180 is the Proton acceptor of the active site. K182 lines the substrate pocket. K206, D208, and E209 together coordinate Mg(2+). K206 is modified (N6-carboxylysine). H298 acts as the Proton acceptor in catalysis. Residues R299, H331, and S383 each contribute to the substrate site.

This sequence belongs to the RuBisCO large chain family. Type I subfamily. In terms of assembly, heterohexadecamer of 8 large chains and 8 small chains. Requires Mg(2+) as cofactor.

It catalyses the reaction 2 (2R)-3-phosphoglycerate + 2 H(+) = D-ribulose 1,5-bisphosphate + CO2 + H2O. It carries out the reaction D-ribulose 1,5-bisphosphate + O2 = 2-phosphoglycolate + (2R)-3-phosphoglycerate + 2 H(+). Functionally, ruBisCO catalyzes two reactions: the carboxylation of D-ribulose 1,5-bisphosphate, the primary event in carbon dioxide fixation, as well as the oxidative fragmentation of the pentose substrate. Both reactions occur simultaneously and in competition at the same active site. The chain is Ribulose bisphosphate carboxylase large chain 2 from Nitrobacter winogradskyi (strain ATCC 25391 / DSM 10237 / CIP 104748 / NCIMB 11846 / Nb-255).